Here is a 159-residue protein sequence, read N- to C-terminus: L-alanine exporter AlaE (159 aa).

4 consecutive transmembrane segments (helical) span residues 17 to 37 (FAMVIFSFITGMMIEVFVSGM), 48 to 68 (LSIPVNIAIAWPYGVFRDYLL), 86 to 106 (MVAYVLFQSPVYACILLAVGA), and 110 to 130 (QIITAVTSNAFVSGALGIVYG).

Belongs to the AlaE exporter family.

It is found in the cell inner membrane. Its function is as follows. Exports L-alanine. In Photobacterium profundum (strain SS9), this protein is L-alanine exporter AlaE.